The primary structure comprises 119 residues: Large ribosomal subunit protein P3 (119 aa).

Residues 81–119 form a disordered region; sequence GAAAGAASGGAAAEAPKAEEKKEEEKEESEDDLGFSLFD. The segment covering 84 to 95 has biased composition (low complexity); the sequence is AGAASGGAAAEA.

The protein belongs to the eukaryotic ribosomal protein P1/P2 family. In terms of processing, phosphorylated.

Functionally, plays an important role in the elongation step of protein synthesis. The sequence is that of Large ribosomal subunit protein P3 from Oryza sativa subsp. japonica (Rice).